The primary structure comprises 327 residues: dTDP-4-dehydrorhamnose reductase (327 aa).

A disordered region spans residues 1-22 (MDLINGMGTSPGYWRTPREPGN). NADH contacts are provided by residues 43–45 (GMV), 69–70 (DI), and 91–93 (AYT). NADPH is bound by residues 44 to 45 (MV), 69 to 70 (DI), and 91 to 93 (AYT). 132–133 (TD) contacts dTDP-beta-L-rhamnose. NADH contacts are provided by Tyr-157 and Lys-161. Tyr-157 and Lys-161 together coordinate NADPH. Tyr-157 acts as the Proton donor/acceptor in catalysis. A dTDP-beta-L-rhamnose-binding site is contributed by Trp-182. Positions 264–276 (PERVRPCGSDRHP) are enriched in basic and acidic residues. Residues 264-292 (PERVRPCGSDRHPRPAPRPSYTVLSSQRS) are disordered.

Belongs to the dTDP-4-dehydrorhamnose reductase family. Mg(2+) serves as cofactor.

The enzyme catalyses dTDP-beta-L-rhamnose + NADP(+) = dTDP-4-dehydro-beta-L-rhamnose + NADPH + H(+). It participates in carbohydrate biosynthesis; dTDP-L-rhamnose biosynthesis. In terms of biological role, involved in the biosynthesis of the dTDP-L-rhamnose which is a component of the critical linker, D-N-acetylglucosamine-L-rhamnose disaccharide, which connects the galactan region of arabinogalactan to peptidoglycan via a phosphodiester linkage. Catalyzes the reduction of dTDP-6-deoxy-L-lyxo-4-hexulose to yield dTDP-L-rhamnose. This is dTDP-4-dehydrorhamnose reductase from Mycolicibacterium smegmatis (strain ATCC 700084 / mc(2)155) (Mycobacterium smegmatis).